A 173-amino-acid polypeptide reads, in one-letter code: uncharacterized protein (173 aa).

Residues 1 to 20 (MWYKVLGIVSLCSVYVSTQG) form the signal peptide. N-linked (GlcNAc...) asparagine glycosylation occurs at Asn53.

As to expression, component of the acid-insoluble organic matrix of calcified shell layers (at protein level).

The protein localises to the secreted. This is an uncharacterized protein from Haliotis asinina (Donkey's ear abalone).